A 754-amino-acid chain; its full sequence is 5-methyltetrahydropteroyltriglutamate--homocysteine methyltransferase (754 aa).

Residues 15-18 and K114 each bind 5-methyltetrahydropteroyltri-L-glutamate; that span reads RELK. L-homocysteine is bound by residues 430 to 432 and E483; that span reads IGS. Residues 430–432 and E483 each bind L-methionine; that span reads IGS. 5-methyltetrahydropteroyltri-L-glutamate contacts are provided by residues 514–515 and W560; that span reads RC. Residue D598 coordinates L-homocysteine. D598 serves as a coordination point for L-methionine. E604 lines the 5-methyltetrahydropteroyltri-L-glutamate pocket. 3 residues coordinate Zn(2+): H641, C643, and E665. H694 (proton donor) is an active-site residue. C726 lines the Zn(2+) pocket.

This sequence belongs to the vitamin-B12 independent methionine synthase family. It depends on Zn(2+) as a cofactor.

It carries out the reaction 5-methyltetrahydropteroyltri-L-glutamate + L-homocysteine = tetrahydropteroyltri-L-glutamate + L-methionine. It functions in the pathway amino-acid biosynthesis; L-methionine biosynthesis via de novo pathway; L-methionine from L-homocysteine (MetE route): step 1/1. In terms of biological role, catalyzes the transfer of a methyl group from 5-methyltetrahydrofolate to homocysteine resulting in methionine formation. The chain is 5-methyltetrahydropteroyltriglutamate--homocysteine methyltransferase from Campylobacter jejuni subsp. jejuni serotype O:6 (strain 81116 / NCTC 11828).